The following is a 152-amino-acid chain: 3-hydroxyacyl-[acyl-carrier-protein] dehydratase FabZ (152 aa).

Residue histidine 58 is part of the active site.

The protein belongs to the thioester dehydratase family. FabZ subfamily.

The protein resides in the cytoplasm. It carries out the reaction a (3R)-hydroxyacyl-[ACP] = a (2E)-enoyl-[ACP] + H2O. Involved in unsaturated fatty acids biosynthesis. Catalyzes the dehydration of short chain beta-hydroxyacyl-ACPs and long chain saturated and unsaturated beta-hydroxyacyl-ACPs. This chain is 3-hydroxyacyl-[acyl-carrier-protein] dehydratase FabZ, found in Synechococcus sp. (strain RCC307).